Here is a 65-residue protein sequence, read N- to C-terminus: Large ribosomal subunit protein bL33 (65 aa).

The interval 17–40 (SRSVPSSEKRSAGVSRYTTEKNRR) is disordered.

It belongs to the bacterial ribosomal protein bL33 family.

The protein is Large ribosomal subunit protein bL33 of Prochlorococcus marinus (strain NATL1A).